Reading from the N-terminus, the 512-residue chain is DNA-binding protein (512 aa).

Positions 1 to 105 (MAGRGGSQLE…QDSEDEREAE (105 aa)) are disordered. The span at 9 to 21 (LERRRERTPDRGR) shows a compositional bias: basic and acidic residues. A compositionally biased stretch (pro residues) spans 69 to 78 (QEQPPPPQQP). Over residues 79-88 (PKKKPRKTKH) the composition is skewed to basic residues. Residues 96–105 (QDSEDEREAE) show a composition bias toward acidic residues. Phosphotyrosine; by host is present on Tyr174. Zn(2+)-binding residues include Cys263 and His265. A flexible loop region spans residues 276–310 (IEMDVASENGQRALKENPDRAKVTQNRWGRSVVQL). 6 residues coordinate Zn(2+): Cys318, Cys334, Cys376, Cys378, Cys430, and Cys447. Residues 495-512 (VSLPAGHAETSRQNPFDF) are C-terminal arm, DBP binding.

Belongs to the adenoviridae E2A DNA-binding protein family. Homomultimerizes on viral ssDNA bound to pTP. Forms a initiation complex with viral polymerase, pTP and hosts NFIA and POU2F1/OCT1. Interacts with host SRCAP.

Its subcellular location is the host nucleus. Functionally, plays a role in the elongation phase of viral strand displacement replication by unwinding the template in an ATP-independent fashion, employing its capacity to form multimers. Also enhances the rate of initiation. Released from template upon second strand synthesis. Assembles in complex with viral pTP, viral pol, host NFIA and host POU2F1/OCT1 on viral origin of replication. Covers the whole ssDNA genome during synthesis. The complementary strand synthesis induces its relese from DNA template. May inhibit cellular transcription mediated by the interaction between host SRCAP and CBP. The sequence is that of DNA-binding protein from Homo sapiens (Human).